The following is a 193-amino-acid chain: dTTP/UTP pyrophosphatase (193 aa).

Asp-70 functions as the Proton acceptor in the catalytic mechanism.

Belongs to the Maf family. YhdE subfamily. It depends on a divalent metal cation as a cofactor.

The protein localises to the cytoplasm. It carries out the reaction dTTP + H2O = dTMP + diphosphate + H(+). The catalysed reaction is UTP + H2O = UMP + diphosphate + H(+). Nucleoside triphosphate pyrophosphatase that hydrolyzes dTTP and UTP. May have a dual role in cell division arrest and in preventing the incorporation of modified nucleotides into cellular nucleic acids. The chain is dTTP/UTP pyrophosphatase from Alcanivorax borkumensis (strain ATCC 700651 / DSM 11573 / NCIMB 13689 / SK2).